A 179-amino-acid chain; its full sequence is UPF0227 protein Shewana3_2292 (179 aa).

The protein belongs to the UPF0227 family.

In Shewanella sp. (strain ANA-3), this protein is UPF0227 protein Shewana3_2292.